The primary structure comprises 284 residues: Bifunctional protein FolD (284 aa).

G166–S168 provides a ligand contact to NADP(+).

Belongs to the tetrahydrofolate dehydrogenase/cyclohydrolase family. In terms of assembly, homodimer.

The enzyme catalyses (6R)-5,10-methylene-5,6,7,8-tetrahydrofolate + NADP(+) = (6R)-5,10-methenyltetrahydrofolate + NADPH. It carries out the reaction (6R)-5,10-methenyltetrahydrofolate + H2O = (6R)-10-formyltetrahydrofolate + H(+). It functions in the pathway one-carbon metabolism; tetrahydrofolate interconversion. Catalyzes the oxidation of 5,10-methylenetetrahydrofolate to 5,10-methenyltetrahydrofolate and then the hydrolysis of 5,10-methenyltetrahydrofolate to 10-formyltetrahydrofolate. This Legionella pneumophila (strain Paris) protein is Bifunctional protein FolD.